The following is a 173-amino-acid chain: Co-chaperone protein HscB homolog (173 aa).

One can recognise a J domain in the interval 2–74 (NYFELFSLSP…ISRAEHMLSL (73 aa)).

The protein belongs to the HscB family. In terms of assembly, interacts with HscA and stimulates its ATPase activity.

Co-chaperone involved in the maturation of iron-sulfur cluster-containing proteins. Seems to help targeting proteins to be folded toward HscA. In Shewanella loihica (strain ATCC BAA-1088 / PV-4), this protein is Co-chaperone protein HscB homolog.